The sequence spans 1536 residues: Glycogen debranching enzyme (1536 aa).

Residues Asp-535, His-538, and Asp-670 contribute to the active site.

The protein belongs to the glycogen debranching enzyme family. In terms of assembly, interacts with IGD1.

It localises to the mitochondrion. Its subcellular location is the cytoplasm. The catalysed reaction is Transfers a segment of a (1-&gt;4)-alpha-D-glucan to a new position in an acceptor, which may be glucose or a (1-&gt;4)-alpha-D-glucan.. The enzyme catalyses Hydrolysis of (1-&gt;6)-alpha-D-glucosidic branch linkages in glycogen phosphorylase limit dextrin.. Its activity is regulated as follows. Activity is inhibited by IGD1. Multifunctional enzyme acting as 1,4-alpha-D-glucan:1,4-alpha-D-glucan 4-alpha-D-glycosyltransferase and amylo-1,6-glucosidase in glycogen degradation. The polypeptide is Glycogen debranching enzyme (GDB1) (Saccharomyces cerevisiae (strain ATCC 204508 / S288c) (Baker's yeast)).